Here is a 289-residue protein sequence, read N- to C-terminus: MDIGLREWLIVIGLIVIAGILFDGWRRMRGGKGKLKFKLDRSFANLPDDDGDSAELLGPARVVEHREPSFDEQDLPSVSAREAKERKGGKRQEEPRQGDLDLDEGLALEADPSDAAETVEPRKGKSKGRKEKEREKAPAVAAEPAPVDEVLIINVIARDESGFKGPALLQNILESGLRFGDMDIFHRHESMAGNGEILFSMANAVKPGTFDLDDIDNFSTRAVSFFLGLPGPRHPKQAFDVMVAAARKLAHELNGELKDEQRSVLTAQTIEHYRQRIIDHERRSLMQKR.

A topological domain (periplasmic) is located at residue Met-1. The helical transmembrane segment at 2 to 22 threads the bilayer; the sequence is DIGLREWLIVIGLIVIAGILF. Over 23 to 289 the chain is Cytoplasmic; it reads DGWRRMRGGK…HERRSLMQKR (267 aa). Residues 66 to 141 form a disordered region; the sequence is REPSFDEQDL…KEREKAPAVA (76 aa). Basic and acidic residues predominate over residues 81-99; it reads REAKERKGGKRQEEPRQGD. The span at 100–114 shows a compositional bias: acidic residues; it reads LDLDEGLALEADPSD.

It belongs to the ZipA family. In terms of assembly, interacts with FtsZ via their C-terminal domains.

It localises to the cell inner membrane. In terms of biological role, essential cell division protein that stabilizes the FtsZ protofilaments by cross-linking them and that serves as a cytoplasmic membrane anchor for the Z ring. Also required for the recruitment to the septal ring of downstream cell division proteins. This is Cell division protein ZipA from Pseudomonas aeruginosa (strain LESB58).